Here is a 212-residue protein sequence, read N- to C-terminus: Imidazole glycerol phosphate synthase subunit HisH (212 aa).

The 206-residue stretch at 3 to 208 folds into the Glutamine amidotransferase type-1 domain; the sequence is RIVIVDYGMG…GRMVCDLIST (206 aa). Cysteine 81 serves as the catalytic Nucleophile. Active-site residues include histidine 183 and glutamate 185.

Heterodimer of HisH and HisF.

The protein localises to the cytoplasm. The catalysed reaction is 5-[(5-phospho-1-deoxy-D-ribulos-1-ylimino)methylamino]-1-(5-phospho-beta-D-ribosyl)imidazole-4-carboxamide + L-glutamine = D-erythro-1-(imidazol-4-yl)glycerol 3-phosphate + 5-amino-1-(5-phospho-beta-D-ribosyl)imidazole-4-carboxamide + L-glutamate + H(+). It carries out the reaction L-glutamine + H2O = L-glutamate + NH4(+). Its pathway is amino-acid biosynthesis; L-histidine biosynthesis; L-histidine from 5-phospho-alpha-D-ribose 1-diphosphate: step 5/9. Functionally, IGPS catalyzes the conversion of PRFAR and glutamine to IGP, AICAR and glutamate. The HisH subunit catalyzes the hydrolysis of glutamine to glutamate and ammonia as part of the synthesis of IGP and AICAR. The resulting ammonia molecule is channeled to the active site of HisF. The protein is Imidazole glycerol phosphate synthase subunit HisH of Symbiobacterium thermophilum (strain DSM 24528 / JCM 14929 / IAM 14863 / T).